Here is a 331-residue protein sequence, read N- to C-terminus: ADP-L-glycero-D-manno-heptose-6-epimerase (331 aa).

NADP(+) is bound by residues 11–12 (FI), 32–33 (DN), K39, K54, 75–79 (EGACS), and N92. Catalysis depends on Y139, which acts as the Proton acceptor. K143 serves as a coordination point for NADP(+). Substrate is bound at residue N168. Residues V169 and K177 each coordinate NADP(+). The Proton acceptor role is filled by K177. Residues R179, H186, 200–203 (FGEY), R213, and Y292 each bind substrate.

The protein belongs to the NAD(P)-dependent epimerase/dehydratase family. HldD subfamily. As to quaternary structure, homopentamer. The cofactor is NADP(+).

The catalysed reaction is ADP-D-glycero-beta-D-manno-heptose = ADP-L-glycero-beta-D-manno-heptose. The protein operates within nucleotide-sugar biosynthesis; ADP-L-glycero-beta-D-manno-heptose biosynthesis; ADP-L-glycero-beta-D-manno-heptose from D-glycero-beta-D-manno-heptose 7-phosphate: step 4/4. Catalyzes the interconversion between ADP-D-glycero-beta-D-manno-heptose and ADP-L-glycero-beta-D-manno-heptose via an epimerization at carbon 6 of the heptose. The polypeptide is ADP-L-glycero-D-manno-heptose-6-epimerase (Ralstonia nicotianae (strain ATCC BAA-1114 / GMI1000) (Ralstonia solanacearum)).